The sequence spans 288 residues: Pantothenate synthetase (288 aa).

Residue 30 to 37 (MGFLHEGH) participates in ATP binding. Catalysis depends on His37, which acts as the Proton donor. A (R)-pantoate-binding site is contributed by Gln61. Gln61 serves as a coordination point for beta-alanine. 147–150 (GLKD) is an ATP binding site. Gln153 is a binding site for (R)-pantoate. ATP is bound by residues Val176 and 184 to 187 (KSSR).

The protein belongs to the pantothenate synthetase family. Homodimer.

It is found in the cytoplasm. It catalyses the reaction (R)-pantoate + beta-alanine + ATP = (R)-pantothenate + AMP + diphosphate + H(+). Its pathway is cofactor biosynthesis; (R)-pantothenate biosynthesis; (R)-pantothenate from (R)-pantoate and beta-alanine: step 1/1. Functionally, catalyzes the condensation of pantoate with beta-alanine in an ATP-dependent reaction via a pantoyl-adenylate intermediate. This Bacillus pumilus (strain SAFR-032) protein is Pantothenate synthetase.